Reading from the N-terminus, the 178-residue chain is Large ribosomal subunit protein uL10 (178 aa).

The protein belongs to the universal ribosomal protein uL10 family. Part of the ribosomal stalk of the 50S ribosomal subunit. The N-terminus interacts with L11 and the large rRNA to form the base of the stalk. The C-terminus forms an elongated spine to which L12 dimers bind in a sequential fashion forming a multimeric L10(L12)X complex.

Forms part of the ribosomal stalk, playing a central role in the interaction of the ribosome with GTP-bound translation factors. This is Large ribosomal subunit protein uL10 from Thermosynechococcus vestitus (strain NIES-2133 / IAM M-273 / BP-1).